A 1785-amino-acid chain; its full sequence is Mellein synthase (1785 aa).

The segment at 1 to 36 (MATPDDPATPALSLSASNSSSPTAASSVPPPTGTSE) is disordered. Residues 8 to 27 (ATPALSLSASNSSSPTAASS) show a composition bias toward low complexity. Residues 39-464 (YDDVAIIGMS…GTVSHAIIEQ (426 aa)) enclose the Ketosynthase family 3 (KS3) domain. Catalysis depends on for beta-ketoacyl synthase activity residues Cys211, His346, and His386. The interval 575-888 (VWVFSGHGSH…AVAQLWTKGV (314 aa)) is malonyl-CoA:ACP transacylase (MAT) domain. Catalysis depends on Ser661, which acts as the For malonyltransferase activity. Positions 933 to 1047 (NNMLGQRMVV…ASWENEPSAN (115 aa)) are N-terminal hotdog fold. The PKS/mFAS DH domain maps to 933 to 1206 (NNMLGQRMVV…FTEVEATPTK (274 aa)). The dehydratase (DH) domain stretch occupies residues 935–1203 (MLGQRMVVAG…SIRFTEVEAT (269 aa)). His965 serves as the catalytic Proton acceptor; for dehydratase activity. The C-terminal hotdog fold stretch occupies residues 1062–1206 (GTRVSETFSV…FTEVEATPTK (145 aa)). Asp1123 (proton donor; for dehydratase activity) is an active-site residue. Residues 1418 to 1608 (GTYVLTGGLG…AIAFQWTAWR (191 aa)) are ketoreductase (KR) domain. Residues 1681–1698 (QDQSAPASGNASDSSGRP) show a composition bias toward polar residues. Residues 1681-1701 (QDQSAPASGNASDSSGRPTAS) form a disordered region. The 76-residue stretch at 1706-1781 (PWLDVKIREC…AMVGWFQKQF (76 aa)) folds into the Carrier domain. An O-(pantetheine 4'-phosphoryl)serine modification is found at Ser1741.

It functions in the pathway secondary metabolite biosynthesis. Its function is as follows. Polyketide synthase that produces (R)-mellein, a secondary metabolite that inhibits the germination of wheat (Triticum aestivum) and barrel medic (Medicago truncatula) seeds. Condensates 1 acetate starter unit and 4 extender malonate units. The nascent pentaketide intermediate then undergoes an aldol cyclization and is aromatized via dehydration. The (R)-O-methylmellein isolated from P.nodorum is most likely to be derived from (R)-mellein via an additional methylation at the hydroxyl group. Interestingly, no O-methyltransferase gene is encoded in the vicinity of MLNS on the chromosome. Thus, the O-methylation is likely to be catalyzed by an endogenous O-methyltransferase encoded elsewhere in the genome of P.nodorum. The sequence is that of Mellein synthase from Phaeosphaeria nodorum (strain SN15 / ATCC MYA-4574 / FGSC 10173) (Glume blotch fungus).